Here is a 1004-residue protein sequence, read N- to C-terminus: 2-oxoglutarate dehydrogenase E1 component (1004 aa).

The protein belongs to the alpha-ketoglutarate dehydrogenase family. Homodimer. Part of the 2-oxoglutarate dehydrogenase (OGDH) complex composed of E1 (2-oxoglutarate dehydrogenase), E2 (dihydrolipoamide succinyltransferase) and E3 (dihydrolipoamide dehydrogenase); the complex contains multiple copies of the three enzymatic components (E1, E2 and E3). It depends on thiamine diphosphate as a cofactor.

It catalyses the reaction N(6)-[(R)-lipoyl]-L-lysyl-[protein] + 2-oxoglutarate + H(+) = N(6)-[(R)-S(8)-succinyldihydrolipoyl]-L-lysyl-[protein] + CO2. Functionally, E1 component of the 2-oxoglutarate dehydrogenase (OGDH) complex which catalyzes the decarboxylation of 2-oxoglutarate, the first step in the conversion of 2-oxoglutarate to succinyl-CoA and CO(2). This is 2-oxoglutarate dehydrogenase E1 component from Brucella suis (strain ATCC 23445 / NCTC 10510).